We begin with the raw amino-acid sequence, 269 residues long: ATP synthase subunit delta (269 aa).

The protein belongs to the ATPase delta chain family. In terms of assembly, F-type ATPases have 2 components, F(1) - the catalytic core - and F(0) - the membrane proton channel. F(1) has five subunits: alpha(3), beta(3), gamma(1), delta(1), epsilon(1). F(0) has three main subunits: a(1), b(2) and c(10-14). The alpha and beta chains form an alternating ring which encloses part of the gamma chain. F(1) is attached to F(0) by a central stalk formed by the gamma and epsilon chains, while a peripheral stalk is formed by the delta and b chains.

Its subcellular location is the cell membrane. Its function is as follows. F(1)F(0) ATP synthase produces ATP from ADP in the presence of a proton or sodium gradient. F-type ATPases consist of two structural domains, F(1) containing the extramembraneous catalytic core and F(0) containing the membrane proton channel, linked together by a central stalk and a peripheral stalk. During catalysis, ATP synthesis in the catalytic domain of F(1) is coupled via a rotary mechanism of the central stalk subunits to proton translocation. Functionally, this protein is part of the stalk that links CF(0) to CF(1). It either transmits conformational changes from CF(0) to CF(1) or is implicated in proton conduction. This Nocardia farcinica (strain IFM 10152) protein is ATP synthase subunit delta.